Consider the following 578-residue polypeptide: Triokinase/FMN cyclase (578 aa).

One can recognise a DhaK domain in the interval 9–336 (SVEGCADDAL…IDAETTAKAW (328 aa)). Dihydroxyacetone is bound by residues 56-59 (GSGH), lysine 109, and aspartate 114. Catalysis depends on histidine 221, which acts as the Tele-hemiaminal-histidine intermediate. The DhaL domain maps to 372–571 (KQMALVLDRI…AAAIFRAILE (200 aa)). Residues 401–404 (DGDC), 446–447 (SS), glycine 486, and 494–495 (TM) each bind ATP. Phosphoserine is present on residues serine 511 and serine 545. An ATP-binding site is contributed by 556-558 (DPG).

The protein belongs to the dihydroxyacetone kinase (DAK) family. In terms of assembly, homodimer. Interacts with IFIH1 (via the CARD domains), the interaction is inhibited by viral infection. Mg(2+) is required as a cofactor. Mn(2+) serves as cofactor. Requires Co(2+) as cofactor.

It catalyses the reaction dihydroxyacetone + ATP = dihydroxyacetone phosphate + ADP + H(+). The enzyme catalyses D-glyceraldehyde + ATP = D-glyceraldehyde 3-phosphate + ADP + H(+). It carries out the reaction FAD = riboflavin cyclic-4',5'-phosphate + AMP + H(+). With respect to regulation, each activity is inhibited by the substrate(s) of the other. In terms of biological role, catalyzes both the phosphorylation of dihydroxyacetone and of glyceraldehyde, and the splitting of ribonucleoside diphosphate-X compounds among which FAD is the best substrate. Represses IFIH1-mediated cellular antiviral response. This Mus musculus (Mouse) protein is Triokinase/FMN cyclase.